A 635-amino-acid polypeptide reads, in one-letter code: DNA topoisomerase 4 subunit B (635 aa).

Residues Tyr5, Asn45, Asp72, 113-119 (GLHGVGA), and Lys340 contribute to the ATP site. The region spanning 422 to 537 (RELFVVEGDS…KGHIYLALPP (116 aa)) is the Toprim domain. The Mg(2+) site is built by Glu428, Asp502, and Asp504.

It belongs to the type II topoisomerase family. ParE type 2 subfamily. As to quaternary structure, heterotetramer composed of ParC and ParE. Mg(2+) serves as cofactor. The cofactor is Mn(2+). Requires Ca(2+) as cofactor.

It carries out the reaction ATP-dependent breakage, passage and rejoining of double-stranded DNA.. Its function is as follows. Topoisomerase IV is essential for chromosome segregation. It relaxes supercoiled DNA. Performs the decatenation events required during the replication of a circular DNA molecule. The protein is DNA topoisomerase 4 subunit B of Mycoplasma pneumoniae (strain ATCC 29342 / M129 / Subtype 1) (Mycoplasmoides pneumoniae).